The sequence spans 424 residues: 3-ketoacyl-CoA thiolase B, peroxisomal (424 aa).

The transit peptide at 1–26 (MHRLQVVLGHLAGRSESSSALQAAPC) directs the protein to the peroxisome. The segment at 1–26 (MHRLQVVLGHLAGRSESSSALQAAPC) is PTS2-type peroxisomal targeting signal. Catalysis depends on C123, which acts as the Acyl-thioester intermediate. 2 positions are modified to N6-acetyllysine: K173 and K234. 3 residues coordinate CoA: R249, T252, and S276. Residue C408 is the Proton donor/acceptor of the active site.

This sequence belongs to the thiolase-like superfamily. Thiolase family. Homodimer. Interacts (via PTS2-type peroxisomal targeting signal region) with PEX7; leading to its translocation into peroxisomes.

It localises to the peroxisome. It catalyses the reaction an acyl-CoA + acetyl-CoA = a 3-oxoacyl-CoA + CoA. The enzyme catalyses 2 acetyl-CoA = acetoacetyl-CoA + CoA. The catalysed reaction is hexanoyl-CoA + acetyl-CoA = 3-oxooctanoyl-CoA + CoA. It carries out the reaction tetradecanoyl-CoA + acetyl-CoA = 3-oxohexadecanoyl-CoA + CoA. It catalyses the reaction 3-oxohexadecanedioyl-CoA + CoA = tetradecanedioyl-CoA + acetyl-CoA. The enzyme catalyses 3-oxo-(6Z,9Z,12Z,15Z,18Z,21Z)-tetracosahexaenoyl-CoA + CoA = (4Z,7Z,10Z,13Z,16Z,19Z)-docosahexaenoyl-CoA + acetyl-CoA. Its pathway is lipid metabolism; peroxisomal fatty acid beta-oxidation. Its function is as follows. Responsible for the thiolytic cleavage of straight chain 3-keto fatty acyl-CoAs (3-oxoacyl-CoAs). Plays an important role in fatty acid peroxisomal beta-oxidation. Catalyzes the cleavage of short, medium, long, and very long straight chain 3-oxoacyl-CoAs. Medium chain straight 3-oxoacyl-CoAs are preferred substrates. The protein is 3-ketoacyl-CoA thiolase B, peroxisomal of Rattus norvegicus (Rat).